The chain runs to 165 residues: Phosphopantetheine adenylyltransferase (165 aa).

Ser9 lines the substrate pocket. Residues 9–10 (SF) and His17 contribute to the ATP site. Substrate is bound by residues Lys41, Val73, and Arg87. Residues 88–90 (GLR), Glu98, and 123–129 (FTLLSSS) contribute to the ATP site.

It belongs to the bacterial CoaD family. As to quaternary structure, homohexamer. Requires Mg(2+) as cofactor.

It localises to the cytoplasm. The catalysed reaction is (R)-4'-phosphopantetheine + ATP + H(+) = 3'-dephospho-CoA + diphosphate. The protein operates within cofactor biosynthesis; coenzyme A biosynthesis; CoA from (R)-pantothenate: step 4/5. In terms of biological role, reversibly transfers an adenylyl group from ATP to 4'-phosphopantetheine, yielding dephospho-CoA (dPCoA) and pyrophosphate. The protein is Phosphopantetheine adenylyltransferase of Herpetosiphon aurantiacus (strain ATCC 23779 / DSM 785 / 114-95).